The following is a 100-amino-acid chain: Small ribosomal subunit protein uS14m (100 aa).

It belongs to the universal ribosomal protein uS14 family.

It is found in the mitochondrion. This Vicia faba (Broad bean) protein is Small ribosomal subunit protein uS14m (RPS14).